The following is a 628-amino-acid chain: Probable potassium transport system protein Kup 1 (628 aa).

Helical transmembrane passes span 18-38 (ITLA…LYAL), 58-78 (IVSL…VLLV), 106-126 (ALLM…AVIT), 141-161 (ITPE…VILF), 175-195 (FGPI…YEIV), 219-239 (IAFI…ALYA), 253-273 (WGSL…ALLL), 285-305 (LLAP…ATVI), 343-363 (IYLP…IIWF), 371-391 (AAYG…LMVV), 401-421 (WLIA…FAAN), and 425-445 (FLAG…VMTT).

It belongs to the HAK/KUP transporter (TC 2.A.72) family.

It is found in the cell inner membrane. It catalyses the reaction K(+)(in) + H(+)(in) = K(+)(out) + H(+)(out). Its function is as follows. Transport of potassium into the cell. Likely operates as a K(+):H(+) symporter. This Aeromonas hydrophila subsp. hydrophila (strain ATCC 7966 / DSM 30187 / BCRC 13018 / CCUG 14551 / JCM 1027 / KCTC 2358 / NCIMB 9240 / NCTC 8049) protein is Probable potassium transport system protein Kup 1.